The chain runs to 215 residues: Orotate phosphoribosyltransferase (215 aa).

Residue lysine 26 participates in 5-phospho-alpha-D-ribose 1-diphosphate binding. Position 34-35 (34-35 (FF)) interacts with orotate. 5-phospho-alpha-D-ribose 1-diphosphate contacts are provided by residues 72–73 (YK), arginine 99, lysine 100, lysine 103, histidine 105, and 124–132 (DDVITAGTA). Threonine 128 and arginine 156 together coordinate orotate.

Belongs to the purine/pyrimidine phosphoribosyltransferase family. PyrE subfamily. Homodimer. It depends on Mg(2+) as a cofactor.

It catalyses the reaction orotidine 5'-phosphate + diphosphate = orotate + 5-phospho-alpha-D-ribose 1-diphosphate. It functions in the pathway pyrimidine metabolism; UMP biosynthesis via de novo pathway; UMP from orotate: step 1/2. Catalyzes the transfer of a ribosyl phosphate group from 5-phosphoribose 1-diphosphate to orotate, leading to the formation of orotidine monophosphate (OMP). The sequence is that of Orotate phosphoribosyltransferase from Stutzerimonas stutzeri (strain A1501) (Pseudomonas stutzeri).